The sequence spans 477 residues: Aspartyl/glutamyl-tRNA(Asn/Gln) amidotransferase subunit B (477 aa).

Belongs to the GatB/GatE family. GatB subfamily. As to quaternary structure, heterotrimer of A, B and C subunits.

It carries out the reaction L-glutamyl-tRNA(Gln) + L-glutamine + ATP + H2O = L-glutaminyl-tRNA(Gln) + L-glutamate + ADP + phosphate + H(+). It catalyses the reaction L-aspartyl-tRNA(Asn) + L-glutamine + ATP + H2O = L-asparaginyl-tRNA(Asn) + L-glutamate + ADP + phosphate + 2 H(+). Its function is as follows. Allows the formation of correctly charged Asn-tRNA(Asn) or Gln-tRNA(Gln) through the transamidation of misacylated Asp-tRNA(Asn) or Glu-tRNA(Gln) in organisms which lack either or both of asparaginyl-tRNA or glutaminyl-tRNA synthetases. The reaction takes place in the presence of glutamine and ATP through an activated phospho-Asp-tRNA(Asn) or phospho-Glu-tRNA(Gln). This chain is Aspartyl/glutamyl-tRNA(Asn/Gln) amidotransferase subunit B, found in Coxiella burnetii (strain CbuG_Q212) (Coxiella burnetii (strain Q212)).